A 158-amino-acid polypeptide reads, in one-letter code: RNA pyrophosphohydrolase (158 aa).

The 145-residue stretch at 6 to 150 folds into the Nudix hydrolase domain; the sequence is GYRLNVGIVL…KRDVYRKVMQ (145 aa). The Nudix box signature appears at 39–60; sequence GGINIGETPEQAMYRELFEEIG.

It belongs to the Nudix hydrolase family. RppH subfamily. The cofactor is a divalent metal cation.

Accelerates the degradation of transcripts by removing pyrophosphate from the 5'-end of triphosphorylated RNA, leading to a more labile monophosphorylated state that can stimulate subsequent ribonuclease cleavage. The sequence is that of RNA pyrophosphohydrolase from Blochmanniella pennsylvanica (strain BPEN).